Reading from the N-terminus, the 182-residue chain is Large ribosomal subunit protein uL5 (182 aa).

In terms of assembly, part of the 50S ribosomal subunit; part of the 5S rRNA/uL5/uL18/bL25 (TL7) subcomplex; has also been isolated as a complex with 5S rRNA, bL25 (TL7) and DNA binding protein II. Forms a bridge to the 30S subunit in the 70S ribosome, contacting protein uS13; this bridge is straddled by the 5S rRNA. Contacts the P site tRNA.

Its function is as follows. This is one of the proteins that bind and probably mediate the attachment of the 5S RNA into the large ribosomal subunit, where it forms part of the central protuberance. In the 70S ribosome it contacts protein S13 of the 30S subunit (forming bridge B1b) connecting the head of the 30S subunit to the top of the 50S subunit. The bridge itself contacts the P site tRNA and is implicated in movement during ribosome translocation. Also contacts the P site tRNA independently of the intersubunit bridge; the 5S rRNA and some of its associated proteins might help stabilize positioning of ribosome-bound tRNAs. This chain is Large ribosomal subunit protein uL5 (rplE), found in Thermus thermophilus (strain ATCC 27634 / DSM 579 / HB8).